The following is a 260-amino-acid chain: Ribosomal RNA small subunit methyltransferase J (260 aa).

S-adenosyl-L-methionine is bound by residues 125–126 and Asp-179; that span reads ER. The interval 234 to 260 is disordered; the sequence is IDGPKPSHALDGKSSRYDIYPKKALKP. A compositionally biased stretch (basic and acidic residues) spans 241 to 254; the sequence is HALDGKSSRYDIYP.

Belongs to the methyltransferase superfamily. RsmJ family.

Its subcellular location is the cytoplasm. It catalyses the reaction guanosine(1516) in 16S rRNA + S-adenosyl-L-methionine = N(2)-methylguanosine(1516) in 16S rRNA + S-adenosyl-L-homocysteine + H(+). Functionally, specifically methylates the guanosine in position 1516 of 16S rRNA. In Pseudomonas fluorescens (strain SBW25), this protein is Ribosomal RNA small subunit methyltransferase J.